We begin with the raw amino-acid sequence, 1583 residues long: MFLCFCTAPILCLWINSGGAVVVSNESLVVCEPVSYPYSLQVLRSFSQRVNLRTKRAVTTDAWSFAYQISTSSLNVNGWYVNFTSPLGWSYPNGKLFGIVLGSDAMMRASVSTFTYDVISYVGQRPNLDCQINDLANGGLESRYSTVRVDNCGNYPCHGGGKPGCSIGHPYMANGVRTRVLLTTQSPGIQYEIYSGQDYAVYQITPYTQYTVTMPSGTSGYCQQTPLYVECGSWTPYRVHAYGCDKATQSCNYTISSDWVVAFKSKASAIILRSQLIVALAQKLSRTVGVNKAVYFWFLKQPYHYLSLVNFSPNYALFSPLCKSLRQQSATYSALSYGSPFFVAQECYNNALYLPDCCLYTLFSILFSWDYQVNYPVNNVLQANETFLQLPTTGYLGQTVSQGRMLNLFKDAIVFLDFYDTKFYRTNDGPGGDIFAVVVKQVPVIAYSAFRIEQQTGYLAVKCNGVIQATLAPHSSRVVLLARHMSMWSIAAANSTTIYCPIYTLTSFVRLDISTSWYFHTLAQPSGPIQQVSMPVLSTGAAGVYMHPMIEHWVTLLAQSSVYQPSMFNMGVNKSVTLTTQLQAYAQVYTAWFLSILYTRLPESRRLTLGAQLTPFIQALLSFKQADIDATDVDTVARYNVLILMWGRKYAAVIYNQLPEWSYPLFKGGVGDSMWFRKKFLVTTKIHQTASHFPFIAGYLDFLDYKYIPKYKDVACPLSTMVPSILQVYETPQLFVIIVQCVSTTYSWYPGLRNPHTIYRSYKLGTICVLVPYSSPTDVYSSFGFFFQSALTIPTVQTTDDILPGCVGFVQDSVFTPCHPSGCPVRNSYDNYIICPGSSASNYTLRNYYRTTTPVTNVPIEEVPLQLEIPTVSLTSYELKQSESVLLQDIEGGIVVDHNTGSIWYPGGQAYDVSFYVSVIIRYAPPKLELPSTLANFTSCLDYICFGNQQCRGEAQTFCTSMDYFEQVFNKSLTSLITALQDLHYVLKLVLPETTLELTEDTRRRRRAVDEFSDTISLLSESFERFMSPASQAYMANMMWWDEAFDGISLPQRTGSILSSAPSLSSISSWHSYSSRTPLISNVKTPKTTFNVKLSMPKLPKASTLSTIGSVLSSGLSIASLGLSIFSIIEDRRVIELTQQQIMALEDQITILAGYTTKNFEEIQSSLNTLGQQVQDFSQTSALSLQQLSNGFEQITQQLDKSIYYVMAVQQYATYMSSLVNQLNELSQAVYKTQDMYITCIHSLQSGVLSPNCITPFQICHLYQVAKNLSSGECQPILSEREISRFYSLPLVTDAMVHNDTYWFSWSIPITCSNILGSVYKVQPGYIVNPHHPTSLQYDVPTHVVTSNAGALIFDEHYCDRYNQVYLCTKSAFDLAEASYLTMLYSNQTDNSSLTFHPAPRPDPCVYLSASALYCYYSDECHQCVIAVGNCTNRTVTYENYTYPIMDPQCRGFDQITISSPIAIGADFTALPSRPPLPLHLSYVNVTFNVTLPNELNWTDLVLDYSFKDKVYEISKNITQLHEQILQVSNWASGWFQRLRDFLYGLIPAWITWLTLGFSLFSILISGVNIILFFEMNGKVKKS.

A signal peptide spans 1-20; that stretch reads MFLCFCTAPILCLWINSGGA. Residues 21-1553 are Virion surface-facing; sequence VVVSNESLVV…YGLIPAWITW (1533 aa). Asn25, Asn82, Asn252, Asn384, Asn494, Asn573, Asn842, Asn936, Asn970, Asn1268, Asn1299, Asn1387, Asn1391, Asn1430, Asn1433, Asn1440, Asn1485, Asn1489, Asn1497, and Asn1517 each carry an N-linked (GlcNAc...) asparagine; by host glycan. The helical transmembrane segment at 1554-1574 threads the bilayer; the sequence is LTLGFSLFSILISGVNIILFF. At 1575-1583 the chain is on the intravirion side; the sequence is EMNGKVKKS.

The protein belongs to the torovirinae spike protein family. Homotrimer.

It is found in the virion membrane. Mediates the binding of virions to the host cell receptor and is involved in membrane fusion. In Breda virus 1 (BRV-1), this protein is Spike glycoprotein (S).